A 423-amino-acid chain; its full sequence is Mannitol-1-phosphate 5-dehydrogenase (423 aa).

Zn(2+) is bound by residues Cys40, His69, and Glu70.

This sequence belongs to the zinc-containing alcohol dehydrogenase family. The cofactor is Zn(2+).

It catalyses the reaction D-mannitol 1-phosphate + NAD(+) = beta-D-fructose 6-phosphate + NADH + H(+). Functionally, seems to be involved in mannitol utilization. Complements an E.coli mtlD deletion mutant. This is Mannitol-1-phosphate 5-dehydrogenase from Aliivibrio fischeri (strain ATCC 700601 / ES114) (Vibrio fischeri).